The chain runs to 859 residues: Leucine--tRNA ligase (859 aa).

Positions 42 to 52 (PYPSGKLHMGH) match the 'HIGH' region motif. Residues 618–622 (KMSKS) carry the 'KMSKS' region motif. Lys621 is a binding site for ATP.

The protein belongs to the class-I aminoacyl-tRNA synthetase family.

The protein localises to the cytoplasm. The catalysed reaction is tRNA(Leu) + L-leucine + ATP = L-leucyl-tRNA(Leu) + AMP + diphosphate. In Buchnera aphidicola subsp. Acyrthosiphon pisum (strain APS) (Acyrthosiphon pisum symbiotic bacterium), this protein is Leucine--tRNA ligase.